A 416-amino-acid chain; its full sequence is Chaperone protein dnaJ A6 (416 aa).

One can recognise a J domain in the interval K12–G73. Residues G133–K217 form a CR-type zinc finger. The Zn(2+) site is built by C146, C149, C162, C165, C189, C192, C205, and C208. 3 CXXCXGXG motif repeats span residues C146–G153, C162–G169, and C189–G196. Positions H380–A399 are enriched in basic and acidic residues. Positions H380 to Q416 are disordered.

The protein belongs to the DnaJ family. As to quaternary structure, interacts with ZFP1.

It localises to the nucleus. The protein resides in the cytoplasm. Functionally, involved in disease resistance. Acts as a negative regulator of innate immunity to the rice blast fungus (Magnaporthe oryzae). Acts as a negative regulator of the pathogen-associated molecular pattern (PAMP)-triggered immunity (PTI) response through the inhibition of reactive oxygen species (ROS) accumulation and expression of defense-related genes. May function via the ubiquitin-proteasome degradation pathway. In Oryza sativa subsp. japonica (Rice), this protein is Chaperone protein dnaJ A6.